We begin with the raw amino-acid sequence, 443 residues long: Phosphoglucosamine mutase (443 aa).

S102 serves as the catalytic Phosphoserine intermediate. Residues S102, D241, D243, and D245 each coordinate Mg(2+). Phosphoserine is present on S102.

This sequence belongs to the phosphohexose mutase family. Mg(2+) serves as cofactor. In terms of processing, activated by phosphorylation.

The enzyme catalyses alpha-D-glucosamine 1-phosphate = D-glucosamine 6-phosphate. Catalyzes the conversion of glucosamine-6-phosphate to glucosamine-1-phosphate. In Albidiferax ferrireducens (strain ATCC BAA-621 / DSM 15236 / T118) (Rhodoferax ferrireducens), this protein is Phosphoglucosamine mutase.